The primary structure comprises 192 residues: Adenylate kinase (192 aa).

Gly-12–Thr-17 is an ATP binding site. Residues Ser-34 to Val-63 form an NMP region. AMP contacts are provided by residues Thr-35, Arg-40, Asn-61 to Val-63, Gly-88 to Arg-91, and Gln-95. Residues Gly-130 to Asp-136 form an LID region. Residue Arg-131 coordinates ATP. Positions 133 and 145 each coordinate AMP. Position 173 (Arg-173) interacts with ATP.

It belongs to the adenylate kinase family. Monomer.

The protein localises to the cytoplasm. It carries out the reaction AMP + ATP = 2 ADP. It functions in the pathway purine metabolism; AMP biosynthesis via salvage pathway; AMP from ADP: step 1/1. Its function is as follows. Catalyzes the reversible transfer of the terminal phosphate group between ATP and AMP. Plays an important role in cellular energy homeostasis and in adenine nucleotide metabolism. In Campylobacter jejuni subsp. jejuni serotype O:2 (strain ATCC 700819 / NCTC 11168), this protein is Adenylate kinase.